The primary structure comprises 278 residues: Undecaprenyl-diphosphatase (278 aa).

Transmembrane regions (helical) follow at residues 3–23 (YILIGVILGIVQGISEWIPIS), 42–62 (VAYSFGLFMEIGTIAAAIIYF), 88–108 (FLVIVTIITGLMGVPLYLFVI), 112–132 (ILGLPMTVLGVVLLIDGIIIY), 152–172 (IIIVGIAQGLAALPGVSRSGI), 190–210 (LSFISLIPAALGAIGVTVLFS), 225–245 (GLLISIVVATFVSIFFINALL), and 253–273 (VVVLVIILGIIAIISGILSGI).

It belongs to the UppP family.

Its subcellular location is the cell membrane. The catalysed reaction is di-trans,octa-cis-undecaprenyl diphosphate + H2O = di-trans,octa-cis-undecaprenyl phosphate + phosphate + H(+). In terms of biological role, catalyzes the dephosphorylation of undecaprenyl diphosphate (UPP). The polypeptide is Undecaprenyl-diphosphatase (Saccharolobus islandicus (strain M.16.4 / Kamchatka #3) (Sulfolobus islandicus)).